Consider the following 126-residue polypeptide: MRHYEIVFMVHPDQSEQVPGMIERYTGSVKEAGGQIHRLEDWGRRQLAYPINKLHKAHYVLMNVEAPQEVIDELETTFRYNDAVLRNVIIRTKHAVTEASPMAKAKDERKVAVAEVETNNFEDAEE.

Belongs to the bacterial ribosomal protein bS6 family.

Binds together with bS18 to 16S ribosomal RNA. The polypeptide is Small ribosomal subunit protein bS6 (Actinobacillus succinogenes (strain ATCC 55618 / DSM 22257 / CCUG 43843 / 130Z)).